The primary structure comprises 431 residues: Histidinol dehydrogenase (431 aa).

Residues Y130, Q191, and N214 each coordinate NAD(+). Substrate is bound by residues S237, Q259, and H262. 2 residues coordinate Zn(2+): Q259 and H262. Residues E327 and H328 each act as proton acceptor in the active site. Residues H328, D361, E415, and H420 each contribute to the substrate site. Residue D361 coordinates Zn(2+). H420 serves as a coordination point for Zn(2+).

It belongs to the histidinol dehydrogenase family. Requires Zn(2+) as cofactor.

The catalysed reaction is L-histidinol + 2 NAD(+) + H2O = L-histidine + 2 NADH + 3 H(+). Its pathway is amino-acid biosynthesis; L-histidine biosynthesis; L-histidine from 5-phospho-alpha-D-ribose 1-diphosphate: step 9/9. In terms of biological role, catalyzes the sequential NAD-dependent oxidations of L-histidinol to L-histidinaldehyde and then to L-histidine. This Syntrophotalea carbinolica (strain DSM 2380 / NBRC 103641 / GraBd1) (Pelobacter carbinolicus) protein is Histidinol dehydrogenase.